The chain runs to 275 residues: Methylglyoxal reductase DkgA (275 aa).

The active-site Proton donor is the Tyr-51. His-107 serves as a coordination point for substrate. Residue 187–241 (SPLAQGGEGVFDQKVIRELADKYGKTPAQIVIRWHLDCGLVVIPKSVTPSRIAEN) participates in NADP(+) binding.

Belongs to the aldo/keto reductase family. As to quaternary structure, monomer.

Its subcellular location is the cytoplasm. The catalysed reaction is hydroxyacetone + NADP(+) = methylglyoxal + NADPH + H(+). In terms of biological role, aldo-keto reductase that significantly contributes to cellular methylglyoxal detoxification by catalyzing the NADPH-dependent conversion of methylglyoxal to acetol. This Salmonella typhimurium (strain LT2 / SGSC1412 / ATCC 700720) protein is Methylglyoxal reductase DkgA.